Here is a 181-residue protein sequence, read N- to C-terminus: 6,7-dimethyl-8-ribityllumazine synthase (181 aa).

5-amino-6-(D-ribitylamino)uracil contacts are provided by residues Y27, 58 to 60, and 87 to 89; these read ALE and CVI. 92 to 93 is a (2S)-2-hydroxy-3-oxobutyl phosphate binding site; sequence ET. H95 serves as the catalytic Proton donor. N120 is a binding site for 5-amino-6-(D-ribitylamino)uracil. R134 is a (2S)-2-hydroxy-3-oxobutyl phosphate binding site.

It belongs to the DMRL synthase family.

The enzyme catalyses (2S)-2-hydroxy-3-oxobutyl phosphate + 5-amino-6-(D-ribitylamino)uracil = 6,7-dimethyl-8-(1-D-ribityl)lumazine + phosphate + 2 H2O + H(+). It participates in cofactor biosynthesis; riboflavin biosynthesis; riboflavin from 2-hydroxy-3-oxobutyl phosphate and 5-amino-6-(D-ribitylamino)uracil: step 1/2. In terms of biological role, catalyzes the formation of 6,7-dimethyl-8-ribityllumazine by condensation of 5-amino-6-(D-ribitylamino)uracil with 3,4-dihydroxy-2-butanone 4-phosphate. This is the penultimate step in the biosynthesis of riboflavin. This is 6,7-dimethyl-8-ribityllumazine synthase from Methylobacterium nodulans (strain LMG 21967 / CNCM I-2342 / ORS 2060).